We begin with the raw amino-acid sequence, 89 residues long: UPF0335 protein RPE_4107 (89 aa).

It belongs to the UPF0335 family.

The polypeptide is UPF0335 protein RPE_4107 (Rhodopseudomonas palustris (strain BisA53)).